The chain runs to 298 residues: ATP phosphoribosyltransferase (298 aa).

Belongs to the ATP phosphoribosyltransferase family. Long subfamily. It depends on Mg(2+) as a cofactor.

The protein localises to the cytoplasm. It carries out the reaction 1-(5-phospho-beta-D-ribosyl)-ATP + diphosphate = 5-phospho-alpha-D-ribose 1-diphosphate + ATP. Its pathway is amino-acid biosynthesis; L-histidine biosynthesis; L-histidine from 5-phospho-alpha-D-ribose 1-diphosphate: step 1/9. With respect to regulation, feedback inhibited by histidine. Catalyzes the condensation of ATP and 5-phosphoribose 1-diphosphate to form N'-(5'-phosphoribosyl)-ATP (PR-ATP). Has a crucial role in the pathway because the rate of histidine biosynthesis seems to be controlled primarily by regulation of HisG enzymatic activity. The chain is ATP phosphoribosyltransferase from Tolumonas auensis (strain DSM 9187 / NBRC 110442 / TA 4).